Reading from the N-terminus, the 329-residue chain is Sex comb on midleg-like protein 1 (329 aa).

Phosphoserine occurs at positions 138 and 238. Residues 138-157 (SPTLPVSRRENNSPSNLPRP) form a disordered region. Positions 258-325 (WSVEAVVLFL…YYIDRLKQGK (68 aa)) constitute an SAM domain.

It belongs to the SCM family. In terms of tissue distribution, ubiquitous. Expressed in fetal and adult tissues.

Its subcellular location is the nucleus. Putative Polycomb group (PcG) protein. PcG proteins act by forming multiprotein complexes, which are required to maintain the transcriptionally repressive state of homeotic genes throughout development. May be involved in spermatogenesis during sexual maturation. The sequence is that of Sex comb on midleg-like protein 1 (SCML1) from Homo sapiens (Human).